Consider the following 25-residue polypeptide: TPLKESTCYLPKETGPCVGYFFRYY.

The 19-residue stretch at 7-25 folds into the BPTI/Kunitz inhibitor domain; that stretch reads TCYLPKETGPCVGYFFRYY.

Its subcellular location is the secreted. Its function is as follows. Inhibits trypsin, human plasma kallikrein and human neutrophil elastase. The protein is Kunitz-type serine protease inhibitor 4 of Rhipicephalus microplus (Cattle tick).